The chain runs to 448 residues: Bifunctional protein GlmU (448 aa).

The interval Met1–Leu229 is pyrophosphorylase. UDP-N-acetyl-alpha-D-glucosamine is bound by residues Leu11–Gly14, Lys25, Gln76, Gly81–Thr82, Tyr103–Asp105, Gly140, Glu154, Asn169, and Asn227. Asp105 lines the Mg(2+) pocket. Asn227 is a binding site for Mg(2+). Positions Leu230–Ser250 are linker. The segment at Gly251–Leu448 is N-acetyltransferase. UDP-N-acetyl-alpha-D-glucosamine is bound at residue Lys351. The active-site Proton acceptor is His363. 2 residues coordinate UDP-N-acetyl-alpha-D-glucosamine: Tyr366 and Asn377. Acetyl-CoA-binding positions include Ala380, Asn386–Tyr387, Ser405, and Ala423.

It in the N-terminal section; belongs to the N-acetylglucosamine-1-phosphate uridyltransferase family. The protein in the C-terminal section; belongs to the transferase hexapeptide repeat family. Homotrimer. It depends on Mg(2+) as a cofactor.

The protein localises to the cytoplasm. It carries out the reaction alpha-D-glucosamine 1-phosphate + acetyl-CoA = N-acetyl-alpha-D-glucosamine 1-phosphate + CoA + H(+). The enzyme catalyses N-acetyl-alpha-D-glucosamine 1-phosphate + UTP + H(+) = UDP-N-acetyl-alpha-D-glucosamine + diphosphate. Its pathway is nucleotide-sugar biosynthesis; UDP-N-acetyl-alpha-D-glucosamine biosynthesis; N-acetyl-alpha-D-glucosamine 1-phosphate from alpha-D-glucosamine 6-phosphate (route II): step 2/2. The protein operates within nucleotide-sugar biosynthesis; UDP-N-acetyl-alpha-D-glucosamine biosynthesis; UDP-N-acetyl-alpha-D-glucosamine from N-acetyl-alpha-D-glucosamine 1-phosphate: step 1/1. It participates in bacterial outer membrane biogenesis; LPS lipid A biosynthesis. Its function is as follows. Catalyzes the last two sequential reactions in the de novo biosynthetic pathway for UDP-N-acetylglucosamine (UDP-GlcNAc). The C-terminal domain catalyzes the transfer of acetyl group from acetyl coenzyme A to glucosamine-1-phosphate (GlcN-1-P) to produce N-acetylglucosamine-1-phosphate (GlcNAc-1-P), which is converted into UDP-GlcNAc by the transfer of uridine 5-monophosphate (from uridine 5-triphosphate), a reaction catalyzed by the N-terminal domain. This Buchnera aphidicola subsp. Baizongia pistaciae (strain Bp) protein is Bifunctional protein GlmU.